Here is a 118-residue protein sequence, read N- to C-terminus: Large ribosomal subunit protein bL20 (118 aa).

Belongs to the bacterial ribosomal protein bL20 family.

In terms of biological role, binds directly to 23S ribosomal RNA and is necessary for the in vitro assembly process of the 50S ribosomal subunit. It is not involved in the protein synthesizing functions of that subunit. This Parvibaculum lavamentivorans (strain DS-1 / DSM 13023 / NCIMB 13966) protein is Large ribosomal subunit protein bL20.